Consider the following 333-residue polypeptide: MNLYRRYGWELTLAALLVLEILLFGLSNSRMLDINVLLFSTSDFICIGIVALPLTMVIVSGGIDISFGSTIGLCAIFLGIVFQAGVPMSVAIPLTVLVGALCGLINAGLILYTGVNPLVITLGTLYLFGGSALLLSGLSGATGYEGIGGFPAAFTDFANQTLFGLPIPLVIFMLCVLLFWLLMHRTHSGRHVFLIGQSSRVARYSALPIARTLCMLYAMTGVASAIAAILLVSYFGSARSDLGASFLMPAITAVVLGGANIYGGSGSILGTALAVLLVGYLQQGLQMIGTPNQISSALSGALLILVVVGRSISLHRHLIYEWLQRRRSRKASV.

10 helical membrane-spanning segments follow: residues Tyr-7 to Ser-27, Ile-45 to Ile-65, Phe-67 to Pro-87, Val-90 to Ile-110, Leu-118 to Leu-138, Leu-162 to Leu-182, Thr-212 to Val-232, Ser-240 to Asn-260, Ile-261 to Leu-281, and Ile-288 to Val-308.

The protein belongs to the binding-protein-dependent transport system permease family. AraH/RbsC subfamily. In terms of assembly, the complex is composed of two ATP-binding proteins (LsrA), two transmembrane proteins (LsrC and LsrD) and a solute-binding protein (LsrB).

The protein resides in the cell inner membrane. Functionally, part of the ABC transporter complex LsrABCD involved in autoinducer 2 (AI-2) import. Probably responsible for the translocation of the substrate across the membrane. The sequence is that of Autoinducer 2 import system permease protein LsrD (lsrD) from Yersinia pseudotuberculosis serotype IB (strain PB1/+).